Reading from the N-terminus, the 588-residue chain is Calicin (588 aa).

The BTB domain maps to 28 to 98 (WDMALTVDHH…FYSGKVVISE (71 aa)). The region spanning 133–235 (CLRYLFLAEL…NAVSNKTLMF (103 aa)) is the BACK domain. Serine 149 carries the phosphoserine modification. Kelch repeat units lie at residues 280-327 (SVVI…AAGR), 328-375 (YIYI…TCGG), 377-423 (VYSV…TKGD), 425-475 (NLYI…SFHQ), 476-525 (DNIL…IGDS), and 526-580 (KVFV…LAKL).

Interacts with CYLC1; the interaction may be relevant for proper acrosome attachment to the nuclear envelope.

It localises to the cytoplasm. The protein resides in the cytoskeleton. Its subcellular location is the perinuclear theca. It is found in the calyx. Its function is as follows. Required for both nuclear and acrosomal shaping during spermiogenesis. This is Calicin (Ccin) from Rattus norvegicus (Rat).